The primary structure comprises 98 residues: Large ribosomal subunit protein eL21 (98 aa).

Residues 1-24 are compositionally biased toward basic residues; the sequence is MVKKAHSFRRKTRGKLSKHPRRRG. The disordered stretch occupies residues 1-27; that stretch reads MVKKAHSFRRKTRGKLSKHPRRRGLPP.

This sequence belongs to the eukaryotic ribosomal protein eL21 family. As to quaternary structure, part of the 50S ribosomal subunit.

The protein is Large ribosomal subunit protein eL21 of Thermococcus kodakarensis (strain ATCC BAA-918 / JCM 12380 / KOD1) (Pyrococcus kodakaraensis (strain KOD1)).